Reading from the N-terminus, the 178-residue chain is Translation initiation factor IF-3 (178 aa).

This sequence belongs to the IF-3 family. Monomer.

Its subcellular location is the cytoplasm. Its function is as follows. IF-3 binds to the 30S ribosomal subunit and shifts the equilibrium between 70S ribosomes and their 50S and 30S subunits in favor of the free subunits, thus enhancing the availability of 30S subunits on which protein synthesis initiation begins. The chain is Translation initiation factor IF-3 from Macrococcus caseolyticus (strain JCSC5402) (Macrococcoides caseolyticum).